Here is a 156-residue protein sequence, read N- to C-terminus: Ribosomal RNA large subunit methyltransferase H (156 aa).

Residues Leu74, Gly105, and 124 to 129 (LSKLTL) contribute to the S-adenosyl-L-methionine site.

The protein belongs to the RNA methyltransferase RlmH family. As to quaternary structure, homodimer.

The protein resides in the cytoplasm. It carries out the reaction pseudouridine(1915) in 23S rRNA + S-adenosyl-L-methionine = N(3)-methylpseudouridine(1915) in 23S rRNA + S-adenosyl-L-homocysteine + H(+). In terms of biological role, specifically methylates the pseudouridine at position 1915 (m3Psi1915) in 23S rRNA. The polypeptide is Ribosomal RNA large subunit methyltransferase H (Legionella pneumophila (strain Lens)).